We begin with the raw amino-acid sequence, 209 residues long: ATP-dependent Clp protease proteolytic subunit 2 (209 aa).

The active-site Nucleophile is the serine 106. Histidine 131 is a catalytic residue.

The protein belongs to the peptidase S14 family. As to quaternary structure, fourteen ClpP subunits assemble into 2 heptameric rings which stack back to back to give a disk-like structure with a central cavity, resembling the structure of eukaryotic proteasomes.

The protein localises to the cytoplasm. The enzyme catalyses Hydrolysis of proteins to small peptides in the presence of ATP and magnesium. alpha-casein is the usual test substrate. In the absence of ATP, only oligopeptides shorter than five residues are hydrolyzed (such as succinyl-Leu-Tyr-|-NHMec, and Leu-Tyr-Leu-|-Tyr-Trp, in which cleavage of the -Tyr-|-Leu- and -Tyr-|-Trp bonds also occurs).. Functionally, cleaves peptides in various proteins in a process that requires ATP hydrolysis. Has a chymotrypsin-like activity. Plays a major role in the degradation of misfolded proteins. The protein is ATP-dependent Clp protease proteolytic subunit 2 of Mesorhizobium japonicum (strain LMG 29417 / CECT 9101 / MAFF 303099) (Mesorhizobium loti (strain MAFF 303099)).